Reading from the N-terminus, the 823-residue chain is Ankyrin repeat domain-containing protein 20B (823 aa).

6 ANK repeats span residues 32-65 (SELQ…ARDK), 66-95 (QHRT…QIDI), 99-128 (ENRT…NPNL), 132-161 (YGNT…HIEA), 165-194 (DSNT…STHA), and 198-227 (LRRS…DVFA). Disordered regions lie at residues 302-343 (PEKV…GVED) and 355-401 (VQTL…QLSE). The span at 372–382 (QERHERSEKKQ) shows a compositional bias: basic and acidic residues. 3 coiled-coil regions span residues 431 to 480 (KKLK…KQLE), 565 to 724 (EMIT…NNST), and 776 to 805 (LVLE…EKAE).

The sequence is that of Ankyrin repeat domain-containing protein 20B (ANKRD20A8P) from Homo sapiens (Human).